Reading from the N-terminus, the 478-residue chain is MANKSGRITQVIGAVVDVQFDSHLPEILNALETTNQGNRLVLEVAQHLGENTVRTIAMDSTEGLVRGQAVEDTGGPIMVPVGEATLGRIMNVIGEAVDELGPVVGEAKRAIHQQAPSYSEQSTEAEMLVTGIKVVDLLAPYSKGGKIGLFGGAGVGKTVLIMELINNIAKAHGGYSVFAGVGERTREGNDLYHEMIESKVNVDPHENNGSSAGSKCALVYGQMNEPPGARARVALTGLTVAEHFRDQGQDVLFFVDNIFRFTQAGSEVSALLGRIPSAVGYQPTLATDMGALQERITTTTKGSITSVQAIYVPADDLTDPAPAASFAHLDATTVLSRSIAEKGIYPAVDPLDSTSRILSPLVIGEEHYNVARQVQQTLQRYKALQDIIAILGMDELSEEDKLTVARARKIERFLSQPFHVAEVFTGSPGKLVDLADTIKGFKGLVEGKYDHLPEQAFYMVGTIEEAIEKGKKLAAEAA.

An ATP-binding site is contributed by 151 to 158 (GGAGVGKT).

This sequence belongs to the ATPase alpha/beta chains family. In terms of assembly, F-type ATPases have 2 components, CF(1) - the catalytic core - and CF(0) - the membrane proton channel. CF(1) has five subunits: alpha(3), beta(3), gamma(1), delta(1), epsilon(1). CF(0) has three main subunits: a(1), b(2) and c(9-12). The alpha and beta chains form an alternating ring which encloses part of the gamma chain. CF(1) is attached to CF(0) by a central stalk formed by the gamma and epsilon chains, while a peripheral stalk is formed by the delta and b chains.

It localises to the cell inner membrane. The enzyme catalyses ATP + H2O + 4 H(+)(in) = ADP + phosphate + 5 H(+)(out). In terms of biological role, produces ATP from ADP in the presence of a proton gradient across the membrane. The catalytic sites are hosted primarily by the beta subunits. In Azorhizobium caulinodans (strain ATCC 43989 / DSM 5975 / JCM 20966 / LMG 6465 / NBRC 14845 / NCIMB 13405 / ORS 571), this protein is ATP synthase subunit beta.